Here is a 301-residue protein sequence, read N- to C-terminus: Rhodopsin (301 aa).

The Extracellular segment spans residues 1 to 18; sequence LHMIHLHWYQYPPMNPIM. A helical membrane pass occupies residues 19–43; sequence YPLLLVFMLITGILCLAGNFVTIWV. The Cytoplasmic segment spans residues 44–55; it reads FMNTKSLRTPAN. The chain crosses the membrane as a helical span at residues 56 to 78; sequence LLVVNLAMSDFLMMFTMFPPMMI. Over 79–92 the chain is Extracellular; the sequence is TCYYHTWTLGATFC. Cys92 and Cys169 are oxidised to a cystine. The helical transmembrane segment at 93-115 threads the bilayer; it reads QVYAFLGNLCGCASIWTMVFITF. A 'Ionic lock' involved in activated form stabilization motif is present at residues 116–118; that stretch reads DRY. Topologically, residues 116–134 are cytoplasmic; that stretch reads DRYNVIVKGVAGEPLSTKK. A helical transmembrane segment spans residues 135–155; sequence ATLWILTIWILSTTWCVAPFF. At 156–182 the chain is on the extracellular side; it reads GWNRYVPEGNLTGCGTDYLSQDILSRS. Residue Asn165 is glycosylated (N-linked (GlcNAc...) asparagine). The chain crosses the membrane as a helical span at residues 183 to 204; the sequence is YLYIYSTWVYFLPLAITIYCYV. The Cytoplasmic portion of the chain corresponds to 205 to 245; the sequence is VIIKAVAAHEKGMRDQAKKMGIKSLRNEEAQKTSAECRLAK. The chain crosses the membrane as a helical span at residues 246 to 267; the sequence is IAMTTVALWFIAWTPYLLINWV. Residues 268–278 lie on the Extracellular side of the membrane; it reads GMFARSYLSPV. A helical transmembrane segment spans residues 279–300; sequence YTIWGYVFAKANAVYNPIVYAI. Lys288 bears the N6-(retinylidene)lysine mark.

This sequence belongs to the G-protein coupled receptor 1 family. Opsin subfamily. In terms of assembly, homodimer. Interacts with GNAQ. Post-translationally, contains one covalently linked retinal chromophore.

It is found in the cell projection. The protein resides in the rhabdomere membrane. In terms of biological role, photoreceptor required for image-forming vision at low light intensity. Can use both retinal and 3-dehydroretinal as visual pigment. Light-induced isomerization of 11-cis to all-trans retinal triggers a conformational change that activates signaling via G-proteins. Signaling via GNAQ probably mediates the activation of phospholipase C. The polypeptide is Rhodopsin (RHO) (Orconectes australis (Southern cave crayfish)).